Consider the following 659-residue polypeptide: Cytochrome bo(3) ubiquinol oxidase subunit 1 (659 aa).

The Extracellular segment spans residues 1 to 14; that stretch reads MFGKLSLNSIPYHD. A helical membrane pass occupies residues 15–35; it reads PIIMITCCVVILVFLVISIII. Over 36–56 the chain is Cytoplasmic; it reads TIAQKWQYLWNEWCCTVDHKK. The chain crosses the membrane as a helical span at residues 57–77; the sequence is IAKMYIFLAFIMLFRGFADAI. Residues Arg71, Asp75, and His101 each contribute to the a ubiquinone site. The Extracellular portion of the chain corresponds to 78–109; it reads MMRMQQFLVSSYHGNGTGFLPPHHYDQIFTAH. His109 is a binding site for heme b. A helical transmembrane segment spans residues 110–130; that stretch reads GVIMIFFVAMPLVIGLMNFVV. Over 131–148 the chain is Cytoplasmic; it reads PLQIGSRDVAFPFLNNLS. The chain crosses the membrane as a helical span at residues 149 to 169; that stretch reads LWLTIFSALLMNVSLGIGEFA. Over 170–192 the chain is Extracellular; that stretch reads QTGWLAYPPLSELQYSPGVGVDY. Trp173 contacts heme b. Residues 193 to 213 traverse the membrane as a helical segment; the sequence is WIWSLQISGIGTTLTAINFLV. At 214-235 the chain is on the cytoplasmic side; it reads TIIKMRSSGMNWFKIPVFTWTS. The chain crosses the membrane as a helical span at residues 236 to 256; the sequence is FCTNILIIASFPVLTVSLLLL. The Extracellular segment spans residues 257-280; it reads TLDRYLGFHFFTNDFGGNMMMYVN. The helical transmembrane segment at 281–301 threads the bilayer; the sequence is LIWIWGHPEVYILILPVFGIF. His287 serves as a coordination point for Cu(2+). Residues 287–291 constitute a cross-link (1'-histidyl-3'-tyrosine (His-Tyr)); it reads HPEVY. Tyr291 provides a ligand contact to Fe(II)-heme o. Residues 302–318 lie on the Cytoplasmic side of the membrane; sequence SEVVATFSSKELFGYTS. The chain crosses the membrane as a helical span at residues 319–339; the sequence is LIWATIVITILSFIVWLHHFF. Cu(2+)-binding residues include His336 and His337. Over 340 to 350 the chain is Extracellular; sequence TMGASANVNAF. Residues 351–371 form a helical membrane-spanning segment; sequence FGITTMIISIPTGVKIFNWLF. Residues 372-382 are Cytoplasmic-facing; that stretch reads TMYRGNVRINS. A helical transmembrane segment spans residues 383-403; the sequence is IMLWTIGFLITFSIGGMAGVL. Residues 404-416 lie on the Extracellular side of the membrane; the sequence is LSLPVIDFSLHNS. 2 residues coordinate Fe(II)-heme o: His414 and His422. Residues 417–437 traverse the membrane as a helical segment; sequence LFLVAHFHNVIIGGVVFGCFA. His424 lines the heme b pocket. At 438–459 the chain is on the cytoplasmic side; the sequence is GITYWFPKLFGFMLSEKWGKRA. The helical transmembrane segment at 460 to 480 threads the bilayer; it reads FWCWFFGFFCAFMPLYALGLM. The Extracellular portion of the chain corresponds to 481–499; that stretch reads GMTRRLSQNINPQFHSMLT. Heme b contacts are provided by Arg484 and Arg485. A helical transmembrane segment spans residues 500 to 520; sequence IAALGTILIFIGIVFQIIQIF. Over 521–587 the chain is Cytoplasmic; the sequence is VSIRDRNLNR…KLPILYTSFH (67 aa). The chain crosses the membrane as a helical span at residues 588 to 608; it reads MPKNTKFGFLIGFFAFLLGFS. Ala609 is a topological domain (extracellular). The chain crosses the membrane as a helical span at residues 610–630; it reads VWYIFWLFFISFFVIIYLLVI. The Cytoplasmic segment spans residues 631–659; the sequence is KSLDTNCDYIISIEEIKEIEKCINIKKMD.

The protein belongs to the heme-copper respiratory oxidase family. In terms of assembly, the cytochrome bo(3) ubiquinol oxidase complex is a heterooctamer of two A chains, two B chains, two C chains and two D chains. Cu(2+) serves as cofactor. Heme b is required as a cofactor. The cofactor is Fe(II)-heme o.

It is found in the cell membrane. It catalyses the reaction 2 a ubiquinol + O2 + n H(+)(in) = 2 a ubiquinone + 2 H2O + n H(+)(out). In terms of biological role, cytochrome bo(3) ubiquinol oxidase is the terminal enzyme in the aerobic respiratory chain. Catalyzes the four-electron reduction of O2 to water, using a ubiquinol as a membrane soluble electron donor for molecular oxygen reduction. Has proton pump activity across the membrane in addition to electron transfer, pumping 2 protons/electron and generating a proton motive force. All the redox centers of this enzyme complex are located within the largest subunit, subunit I. Protons are probably pumped via D- and K- channels found in this subunit. The polypeptide is Cytochrome bo(3) ubiquinol oxidase subunit 1 (cyoB) (Buchnera aphidicola subsp. Baizongia pistaciae (strain Bp)).